The following is a 260-amino-acid chain: Global transcriptional regulator CodY (260 aa).

Residues 1-159 (MPNLLQKTRK…SSTVVGIQLL (159 aa)) are GAF domain. The segment at residues 207-226 (ASVIADRIGITRSVIVNALR) is a DNA-binding region (H-T-H motif).

This sequence belongs to the CodY family.

It is found in the cytoplasm. DNA-binding global transcriptional regulator which is involved in the adaptive response to starvation and acts by directly or indirectly controlling the expression of numerous genes in response to nutrient availability. During rapid exponential growth, CodY is highly active and represses genes whose products allow adaptation to nutrient depletion. This is Global transcriptional regulator CodY from Streptococcus equi subsp. zooepidemicus (strain MGCS10565).